The sequence spans 389 residues: Adenylyltransferase and sulfurtransferase uba4 (389 aa).

Residues glycine 40, aspartate 61, 68 to 72 (SNLHR), lysine 85, and 129 to 130 (DT) each bind ATP. Zn(2+) is bound by residues cysteine 171 and cysteine 174. Catalysis depends on cysteine 188, which acts as the Glycyl thioester intermediate; for adenylyltransferase activity. Zn(2+) contacts are provided by cysteine 252 and cysteine 255. The 90-residue stretch at 298 to 387 (AQRAPYLVDV…WSRQIDPNFP (90 aa)) folds into the Rhodanese domain. Cysteine 347 acts as the Cysteine persulfide intermediate in catalysis.

The protein in the N-terminal section; belongs to the HesA/MoeB/ThiF family. UBA4 subfamily. Requires Zn(2+) as cofactor.

It localises to the cytoplasm. It is found in the cytosol. It carries out the reaction [molybdopterin-synthase sulfur-carrier protein]-C-terminal Gly-Gly + ATP + H(+) = [molybdopterin-synthase sulfur-carrier protein]-C-terminal Gly-Gly-AMP + diphosphate. The enzyme catalyses [molybdopterin-synthase sulfur-carrier protein]-C-terminal Gly-Gly-AMP + S-sulfanyl-L-cysteinyl-[cysteine desulfurase] + AH2 = [molybdopterin-synthase sulfur-carrier protein]-C-terminal-Gly-aminoethanethioate + L-cysteinyl-[cysteine desulfurase] + A + AMP + 2 H(+). Its pathway is tRNA modification; 5-methoxycarbonylmethyl-2-thiouridine-tRNA biosynthesis. The protein operates within cofactor biosynthesis; molybdopterin biosynthesis. Its function is as follows. Plays a central role in 2-thiolation of mcm(5)S(2)U at tRNA wobble positions of cytosolic tRNA(Lys), tRNA(Glu) and tRNA(Gln). Also essential during biosynthesis of the molybdenum cofactor. Acts by mediating the C-terminal thiocarboxylation of sulfur carriers URM1 and CNX5/MOCS2A. Its N-terminus first activates urm1 and mocs2a as acyl-adenylates (-COAMP), then the persulfide sulfur on the catalytic cysteine is transferred to URM1 and CNX5/MOCS2A to form thiocarboxylation (-COSH) of their C-terminus. The reaction probably involves hydrogen sulfide that is generated from the persulfide intermediate and that acts as a nucleophile towards URM1 and CNX5/MOCS2A. Subsequently, a transient disulfide bond is formed. Does not use thiosulfate as sulfur donor; NFS1 probably acting as a sulfur donor for thiocarboxylation reactions. Required for growth on nitrate as a sole nitrogen source. This is Adenylyltransferase and sulfurtransferase uba4 from Ogataea parapolymorpha (strain ATCC 26012 / BCRC 20466 / JCM 22074 / NRRL Y-7560 / DL-1) (Yeast).